Consider the following 241-residue polypeptide: Fatty acid metabolism regulator protein (241 aa).

Residues 11–79 enclose the HTH gntR-type domain; the sequence is QSPAALAEEY…HGKPTKVNNI (69 aa). Positions 39 to 58 form a DNA-binding region, H-T-H motif; sequence ERDLADKIGVTRTTLREVLQ.

Homodimer.

The protein localises to the cytoplasm. Multifunctional regulator of fatty acid metabolism. The chain is Fatty acid metabolism regulator protein from Haemophilus influenzae (strain PittEE).